The following is a 138-amino-acid chain: Cyclin-dependent kinase 4 inhibitor B (138 aa).

One copy of the ANK 1; truncated repeat lies at 13 to 39 (GSDEGLASAAARGLVEKVRQLLEAGAD). ANK repeat units lie at residues 46–74 (FGRR…EPNC), 79–108 (TLTR…RLDV), and 112–138 (WGRL…ATGD).

Belongs to the CDKN2 cyclin-dependent kinase inhibitor family. In terms of assembly, heterodimer of CDKN2B with CDK4 or CDK6. Isoform 2 does not interact with CDK4 nor CDK6. Isoform 2 is expressed in normal (keratinocytes, fibroblasts) and tumor cell lines.

It localises to the cytoplasm. In terms of biological role, interacts strongly with CDK4 and CDK6. Potent inhibitor. Potential effector of TGF-beta induced cell cycle arrest. The chain is Cyclin-dependent kinase 4 inhibitor B (CDKN2B) from Homo sapiens (Human).